We begin with the raw amino-acid sequence, 141 residues long: Large ribosomal subunit protein uL11 (141 aa).

It belongs to the universal ribosomal protein uL11 family. Part of the ribosomal stalk of the 50S ribosomal subunit. Interacts with L10 and the large rRNA to form the base of the stalk. L10 forms an elongated spine to which L12 dimers bind in a sequential fashion forming a multimeric L10(L12)X complex. One or more lysine residues are methylated.

Forms part of the ribosomal stalk which helps the ribosome interact with GTP-bound translation factors. The chain is Large ribosomal subunit protein uL11 from Petrotoga mobilis (strain DSM 10674 / SJ95).